We begin with the raw amino-acid sequence, 310 residues long: Glucan endo-1,3-beta-glucosidase GI (310 aa).

The active-site Proton donor is Glu-96. The active-site Nucleophile is the Glu-234.

This sequence belongs to the glycosyl hydrolase 17 family. As to quaternary structure, monomer. Young leaves and roots.

The enzyme catalyses Hydrolysis of (1-&gt;3)-beta-D-glucosidic linkages in (1-&gt;3)-beta-D-glucans.. May provide a degree of protection against microbial invasion of germinated barley grain through its ability to degrade fungal cell wall polysaccharides. Does not hydrolyze (1,3;1,4)-beta-D-glucans, (1,6)-beta-D-glucan, CM-cellulose, insoluble (1,3)-beta-D-glucans or aryl beta-D-glycosides. The sequence is that of Glucan endo-1,3-beta-glucosidase GI from Hordeum vulgare (Barley).